The sequence spans 403 residues: Argininosuccinate synthase (403 aa).

ATP contacts are provided by residues 10 to 18 (AYSGGLDTS) and A37. Positions 88 and 93 each coordinate L-citrulline. An ATP-binding site is contributed by G118. T120, N124, and D125 together coordinate L-aspartate. Residue N124 coordinates L-citrulline. Positions 128, 178, 187, 263, and 275 each coordinate L-citrulline.

Belongs to the argininosuccinate synthase family. Type 1 subfamily. Homotetramer.

The protein localises to the cytoplasm. The enzyme catalyses L-citrulline + L-aspartate + ATP = 2-(N(omega)-L-arginino)succinate + AMP + diphosphate + H(+). Its pathway is amino-acid biosynthesis; L-arginine biosynthesis; L-arginine from L-ornithine and carbamoyl phosphate: step 2/3. The polypeptide is Argininosuccinate synthase (Marinobacter nauticus (strain ATCC 700491 / DSM 11845 / VT8) (Marinobacter aquaeolei)).